Here is a 341-residue protein sequence, read N- to C-terminus: tRNA N6-adenosine threonylcarbamoyltransferase (341 aa).

Fe cation-binding residues include His114 and His118. Substrate-binding positions include 136–140, Asp169, Gly182, Asp186, and Asn278; that span reads LVSGG. Position 304 (Asp304) interacts with Fe cation.

The protein belongs to the KAE1 / TsaD family. Fe(2+) is required as a cofactor.

Its subcellular location is the cytoplasm. It catalyses the reaction L-threonylcarbamoyladenylate + adenosine(37) in tRNA = N(6)-L-threonylcarbamoyladenosine(37) in tRNA + AMP + H(+). In terms of biological role, required for the formation of a threonylcarbamoyl group on adenosine at position 37 (t(6)A37) in tRNAs that read codons beginning with adenine. Is involved in the transfer of the threonylcarbamoyl moiety of threonylcarbamoyl-AMP (TC-AMP) to the N6 group of A37, together with TsaE and TsaB. TsaD likely plays a direct catalytic role in this reaction. The chain is tRNA N6-adenosine threonylcarbamoyltransferase from Lactococcus lactis subsp. cremoris (strain SK11).